A 67-amino-acid chain; its full sequence is Putative sodium channel alpha-toxin Acra7 (67 aa).

The region spanning 2–66 (RDGYIVKPTN…PIKDPNQDCT (65 aa)) is the LCN-type CS-alpha/beta domain. 4 disulfide bridges follow: Cys-12-Cys-65, Cys-16-Cys-37, Cys-23-Cys-47, and Cys-27-Cys-49. Arg-67 is a propeptide (removed by a carboxypeptidase).

The protein belongs to the long (4 C-C) scorpion toxin superfamily. Sodium channel inhibitor family. Alpha subfamily. Expressed by the venom gland.

It localises to the secreted. Its function is as follows. Alpha toxins bind voltage-independently at site-3 of sodium channels (Nav) and inhibit the inactivation of the activated channels, thereby blocking neuronal transmission. The sequence is that of Putative sodium channel alpha-toxin Acra7 from Androctonus crassicauda (Arabian fat-tailed scorpion).